We begin with the raw amino-acid sequence, 513 residues long: Maturase K (513 aa).

It belongs to the intron maturase 2 family. MatK subfamily.

It is found in the plastid. The protein localises to the chloroplast. Functionally, usually encoded in the trnK tRNA gene intron. Probably assists in splicing its own and other chloroplast group II introns. This Byblis liniflora (Carnivorous plant) protein is Maturase K.